The following is a 903-amino-acid chain: Probable leucine--tRNA ligase, mitochondrial (903 aa).

The residue at position 68 (Lys-68) is an N6-acetyllysine. Positions 92 to 102 (YPSGKLHMGHV) match the 'HIGH' region motif. Lys-236 is modified (N6-acetyllysine). The 'KMSKS' region signature appears at 639 to 643 (KMSKS). Lys-642 lines the ATP pocket. At Ser-711 the chain carries Phosphoserine.

The protein belongs to the class-I aminoacyl-tRNA synthetase family.

The protein localises to the mitochondrion matrix. It carries out the reaction tRNA(Leu) + L-leucine + ATP = L-leucyl-tRNA(Leu) + AMP + diphosphate. This Pongo abelii (Sumatran orangutan) protein is Probable leucine--tRNA ligase, mitochondrial (LARS2).